The chain runs to 618 residues: Proline--tRNA ligase (618 aa).

Belongs to the class-II aminoacyl-tRNA synthetase family. ProS type 1 subfamily. As to quaternary structure, homodimer.

Its subcellular location is the cytoplasm. The enzyme catalyses tRNA(Pro) + L-proline + ATP = L-prolyl-tRNA(Pro) + AMP + diphosphate. Catalyzes the attachment of proline to tRNA(Pro) in a two-step reaction: proline is first activated by ATP to form Pro-AMP and then transferred to the acceptor end of tRNA(Pro). As ProRS can inadvertently accommodate and process non-cognate amino acids such as alanine and cysteine, to avoid such errors it has two additional distinct editing activities against alanine. One activity is designated as 'pretransfer' editing and involves the tRNA(Pro)-independent hydrolysis of activated Ala-AMP. The other activity is designated 'posttransfer' editing and involves deacylation of mischarged Ala-tRNA(Pro). The misacylated Cys-tRNA(Pro) is not edited by ProRS. In Streptococcus pyogenes serotype M2 (strain MGAS10270), this protein is Proline--tRNA ligase.